Here is a 148-residue protein sequence, read N- to C-terminus: Large ribosomal subunit protein cL37 (148 aa).

Residues 1 to 65 (MALLCFNSLP…SSHGRIVVKA (65 aa)) constitute a chloroplast transit peptide. Ala66 is modified (N-acetylalanine). The interval 125–148 (LVRKRKMRKKGRWPPSKMKKNKNV) is disordered.

This sequence belongs to the chloroplast-specific ribosomal protein cL37 family. As to quaternary structure, part of the 50S ribosomal subunit.

The protein resides in the plastid. It is found in the chloroplast. The polypeptide is Large ribosomal subunit protein cL37 (PSRP5) (Arabidopsis thaliana (Mouse-ear cress)).